The sequence spans 135 residues: ATP synthase epsilon chain (135 aa).

Belongs to the ATPase epsilon chain family. As to quaternary structure, F-type ATPases have 2 components, CF(1) - the catalytic core - and CF(0) - the membrane proton channel. CF(1) has five subunits: alpha(3), beta(3), gamma(1), delta(1), epsilon(1). CF(0) has three main subunits: a, b and c.

The protein localises to the cell inner membrane. Functionally, produces ATP from ADP in the presence of a proton gradient across the membrane. This chain is ATP synthase epsilon chain, found in Bradyrhizobium sp. (strain BTAi1 / ATCC BAA-1182).